We begin with the raw amino-acid sequence, 969 residues long: Dual serine/threonine and tyrosine protein kinase (969 aa).

A coiled-coil region spans residues 7-37 (QEFRRYLRNRNQLQHVLEETQQALELINLEN). One can recognise a Protein kinase domain in the interval 632-894 (PHCAEEIGRG…PLLGAIVPVL (263 aa)). Residues 638–646 (IGRGQYGIV) and K662 contribute to the ATP site. Catalysis depends on D760, which acts as the Proton acceptor. The segment at 904–945 (SKSLQEVSSDKLQESSTDSRNPALALAEPYNQRGTVVSPPPT) is disordered.

It belongs to the protein kinase superfamily. Ser/Thr protein kinase family.

It localises to the cytoplasm. It catalyses the reaction L-seryl-[protein] + ATP = O-phospho-L-seryl-[protein] + ADP + H(+). It carries out the reaction L-threonyl-[protein] + ATP = O-phospho-L-threonyl-[protein] + ADP + H(+). The enzyme catalyses L-tyrosyl-[protein] + ATP = O-phospho-L-tyrosyl-[protein] + ADP + H(+). This Apis mellifera (Honeybee) protein is Dual serine/threonine and tyrosine protein kinase.